Consider the following 242-residue polypeptide: Dehydration-responsive element-binding protein 1J (242 aa).

Residues 20-29 are compositionally biased toward low complexity; sequence SSATTAATAT. Residues 20–44 are disordered; it reads SSATTAATATGPASPKRPAGRTKFQ. Positions 50–109 form a DNA-binding region, AP2/ERF; it reads VFRGVRRRGRAGRWVCEVRVPGSRGDRLWVGTFDTAEEAARAHDAAMLALCGASASLNFA. A disordered region spans residues 143 to 184; sequence FQRRGSTAATATATSGDAASTAPPSSSPVLSPNDDNASSAST. Residues 148-184 are compositionally biased toward low complexity; the sequence is STAATATATSGDAASTAPPSSSPVLSPNDDNASSAST.

This sequence belongs to the AP2/ERF transcription factor family. ERF subfamily.

The protein localises to the nucleus. In terms of biological role, transcriptional activator that binds specifically to the DNA sequence 5'-[AG]CCGAC-3'. Binding to the C-repeat/DRE element mediates high salinity- and dehydration-inducible transcription. This is Dehydration-responsive element-binding protein 1J (DREB1J) from Oryza sativa subsp. japonica (Rice).